A 318-amino-acid polypeptide reads, in one-letter code: Myoblast determination protein 1 (318 aa).

M1 participates in a covalent cross-link: Peptide (Met-Gly) (interchain with G-Cter in ubiquitin). At K104 the chain carries N6-methyllysine; by EHMT2. Residues 109-160 form the bHLH domain; that stretch reads DRRKAATMRERRRLSKVNEAFETLKRCTSSNPNQRLPKVEILRNAIRYIEGL. Disordered stretches follow at residues 174–224 and 266–318; these read AAAA…RRRN and APAL…YQVL. Residues 197-207 are compositionally biased toward polar residues; the sequence is SDASSPRSNCS. The segment covering 266 to 276 has biased composition (low complexity); the sequence is APALLLADAPP.

Efficient DNA binding requires dimerization with another bHLH protein. Seems to form active heterodimers with ITF-2. Interacts with SUV39H1. Interacts with DDX5. Interacts with CHD2. Interacts with TSC22D3. Interacts with SETD3. Interacts with P-TEFB complex; promotes the transcriptional activity of MYOD1 through its CDK9-mediated phosphorylation. Interacts with CSRP3. Interacts with NUPR1. Phosphorylated by CDK9. This phosphorylation promotes its function in muscle differentiation. Post-translationally, acetylated by a complex containing EP300 and PCAF. The acetylation is essential to activate target genes. Conversely, its deacetylation by SIRT1 inhibits its function. In terms of processing, ubiquitinated on the N-terminus; which is required for proteasomal degradation. Methylation at Lys-104 by EHMT2/G9a inhibits myogenic activity.

The protein localises to the nucleus. Functionally, acts as a transcriptional activator that promotes transcription of muscle-specific target genes and plays a role in muscle differentiation. Together with MYF5 and MYOG, co-occupies muscle-specific gene promoter core region during myogenesis. Induces fibroblasts to differentiate into myoblasts. Interacts with and is inhibited by the twist protein. This interaction probably involves the basic domains of both proteins. This Bos taurus (Bovine) protein is Myoblast determination protein 1 (MYOD1).